The primary structure comprises 379 residues: Homoserine O-succinyltransferase (379 aa).

The 310-residue stretch at 51 to 360 folds into the AB hydrolase-1 domain; that stretch reads NAVLICHALS…DAPQGHDAFL (310 aa). Serine 157 acts as the Nucleophile in catalysis. Arginine 227 lines the substrate pocket. Active-site residues include aspartate 323 and histidine 356. Residue aspartate 357 coordinates substrate.

It belongs to the AB hydrolase superfamily. MetX family. Homodimer.

It is found in the cytoplasm. It catalyses the reaction L-homoserine + succinyl-CoA = O-succinyl-L-homoserine + CoA. Its pathway is amino-acid biosynthesis; L-methionine biosynthesis via de novo pathway; O-succinyl-L-homoserine from L-homoserine: step 1/1. Transfers a succinyl group from succinyl-CoA to L-homoserine, forming succinyl-L-homoserine. The sequence is that of Homoserine O-succinyltransferase from Pseudomonas fluorescens (strain Pf0-1).